Here is a 601-residue protein sequence, read N- to C-terminus: Aspartate--tRNA(Asp/Asn) ligase (601 aa).

Glu-187 contacts L-aspartate. An aspartate region spans residues 211–214; it reads QQFK. The L-aspartate site is built by Arg-233 and His-461. 233 to 235 provides a ligand contact to ATP; it reads RDE. Glu-495 lines the ATP pocket. Position 502 (Arg-502) interacts with L-aspartate. 547–550 provides a ligand contact to ATP; it reads GLDR.

It belongs to the class-II aminoacyl-tRNA synthetase family. Type 1 subfamily. In terms of assembly, homodimer.

It is found in the cytoplasm. The enzyme catalyses tRNA(Asx) + L-aspartate + ATP = L-aspartyl-tRNA(Asx) + AMP + diphosphate. Functionally, aspartyl-tRNA synthetase with relaxed tRNA specificity since it is able to aspartylate not only its cognate tRNA(Asp) but also tRNA(Asn). Reaction proceeds in two steps: L-aspartate is first activated by ATP to form Asp-AMP and then transferred to the acceptor end of tRNA(Asp/Asn). The polypeptide is Aspartate--tRNA(Asp/Asn) ligase (Pelodictyon phaeoclathratiforme (strain DSM 5477 / BU-1)).